The sequence spans 310 residues: MAPKIFIDGEHGTTGLQIRTRMAGRRDVELLSIPEAERRNAAMREDMLNSADIAILCLPDDASKEAVQMVSANNNVRVIDTSTAFRVNPGWAYGFAEMDGAQADRIKAARFVANPGCYPTGAIGLIRPLRAAGLLPDGYPVTVNAVSGYTGGGKQMIAQMENPDHPDAITAPHFLYGLPLTHKHVPEMTVHGLLDRAPIFSPSVGKFAQGMIVQVPLHLGDLAEGTTMESIHAALVAHYAGQEIVTVVPLAESKALSRVNAVELEGKDTMKLFVFGTPGASQVNLVALLDNLGKGASGAAVQNMDLMLAS.

Cysteine 117 is a catalytic residue.

The protein belongs to the NAGSA dehydrogenase family. Type 2 subfamily.

The protein localises to the cytoplasm. It catalyses the reaction N-acetyl-L-glutamate 5-semialdehyde + phosphate + NADP(+) = N-acetyl-L-glutamyl 5-phosphate + NADPH + H(+). Its pathway is amino-acid biosynthesis; L-arginine biosynthesis; N(2)-acetyl-L-ornithine from L-glutamate: step 3/4. Its function is as follows. Catalyzes the NADPH-dependent reduction of N-acetyl-5-glutamyl phosphate to yield N-acetyl-L-glutamate 5-semialdehyde. The protein is N-acetyl-gamma-glutamyl-phosphate reductase of Rhizobium leguminosarum bv. trifolii (strain WSM2304).